The sequence spans 248 residues: Protein FAM133A (248 aa).

A compositionally biased stretch (basic and acidic residues) spans 68–80 (NWKKELEKSREKL). Positions 68-248 (NWKKELEKSR…KKSGSSHKSR (181 aa)) are disordered. The segment covering 90 to 102 (KRERKKKRKKKSC) has biased composition (basic residues). A compositionally biased stretch (low complexity) spans 103-118 (RSSSSSSSSDSSSSSS). The segment covering 127–138 (QGKRRKKKKNRS) has biased composition (basic residues). Basic and acidic residues-rich tracts occupy residues 147–156 (HESESESKES), 163–175 (SKDE…DVRS), and 211–220 (RCEEREQAKE). Positions 221–248 (KVKKKKKKQHKKHSKKKKKKSGSSHKSR) are enriched in basic residues.

This sequence belongs to the FAM133 family.

This chain is Protein FAM133A (FAM133A), found in Homo sapiens (Human).